Reading from the N-terminus, the 273-residue chain is Sulfur carrier protein FdhD (273 aa).

Cys124 functions as the Cysteine persulfide intermediate in the catalytic mechanism. 263-268 (FCRQSR) lines the Mo-bis(molybdopterin guanine dinucleotide) pocket.

It belongs to the FdhD family.

It is found in the cytoplasm. In terms of biological role, required for formate dehydrogenase (FDH) activity. Acts as a sulfur carrier protein that transfers sulfur from IscS to the molybdenum cofactor prior to its insertion into FDH. The chain is Sulfur carrier protein FdhD from Acinetobacter baylyi (strain ATCC 33305 / BD413 / ADP1).